The chain runs to 380 residues: Lipid-A-disaccharide synthase (380 aa).

This sequence belongs to the LpxB family.

The catalysed reaction is a lipid X + a UDP-2-N,3-O-bis[(3R)-3-hydroxyacyl]-alpha-D-glucosamine = a lipid A disaccharide + UDP + H(+). The protein operates within bacterial outer membrane biogenesis; LPS lipid A biosynthesis. In terms of biological role, condensation of UDP-2,3-diacylglucosamine and 2,3-diacylglucosamine-1-phosphate to form lipid A disaccharide, a precursor of lipid A, a phosphorylated glycolipid that anchors the lipopolysaccharide to the outer membrane of the cell. The polypeptide is Lipid-A-disaccharide synthase (Pseudomonas syringae pv. tomato (strain ATCC BAA-871 / DC3000)).